The chain runs to 323 residues: tRNA-modifying protein YgfZ (323 aa).

The folate site is built by Trp-29 and Trp-182.

Belongs to the tRNA-modifying YgfZ family.

It is found in the cytoplasm. Functionally, folate-binding protein involved in regulating the level of ATP-DnaA and in the modification of some tRNAs. It is probably a key factor in regulatory networks that act via tRNA modification, such as initiation of chromosomal replication. The polypeptide is tRNA-modifying protein YgfZ (Vibrio cholerae serotype O1 (strain ATCC 39541 / Classical Ogawa 395 / O395)).